A 329-amino-acid polypeptide reads, in one-letter code: MQFIDQARISVRGGRGGDGIVAFRREKYVPAGGPSGGDGGQGADVVLEADSNLQTLLDFKYKRLFAGIDGRRGGPNRCTGASGPPLVIKVPCGTEVRHLSTGIVLGDLTTHEERLTVAFGGRGGLGNAHYLSNRNRAPEKCTEGRDGEEWPLQLELKLLAEVGIIGLPNAGKSTLISVLSAARPKIADYPFTTLIPNLGVVRRPTGDGTVFADIPGLIAGAAQGAGLGHDFLRHIERTRLLIHLVDGGAEDPLLDLRVVEKELEAYGHGLVERPRILVINKQELIQEEDLDAIVSALTEASGRTPLLVSAAMNRGLDDMLDRVWSELGI.

An Obg domain is found at 1–159 (MQFIDQARIS…WPLQLELKLL (159 aa)). An OBG-type G domain is found at 160–328 (AEVGIIGLPN…MLDRVWSELG (169 aa)). ATP contacts are provided by residues 166–173 (GLPNAGKS), 191–195 (FTTLI), 213–216 (DIPG), 280–283 (NKQE), and 309–311 (SAA). The Mg(2+) site is built by Ser-173 and Thr-193.

The protein belongs to the TRAFAC class OBG-HflX-like GTPase superfamily. OBG GTPase family. As to quaternary structure, monomer. The cofactor is Mg(2+).

The protein resides in the cytoplasm. An essential GTPase which binds GTP, GDP and possibly (p)ppGpp with moderate affinity, with high nucleotide exchange rates and a fairly low GTP hydrolysis rate. Plays a role in control of the cell cycle, stress response, ribosome biogenesis and in those bacteria that undergo differentiation, in morphogenesis control. The sequence is that of GTPase Obg from Synechococcus sp. (strain CC9311).